Here is a 152-residue protein sequence, read N- to C-terminus: Ribosome maturation factor RimP (152 aa).

This sequence belongs to the RimP family.

The protein resides in the cytoplasm. In terms of biological role, required for maturation of 30S ribosomal subunits. The protein is Ribosome maturation factor RimP of Desulfitobacterium hafniense (strain DSM 10664 / DCB-2).